A 142-amino-acid polypeptide reads, in one-letter code: Large-conductance mechanosensitive channel (142 aa).

3 helical membrane passes run 19–39, 41–61, and 78–98; these read VGII…ADLV, PFIA…ALDG, and FAFG…FVVF.

This sequence belongs to the MscL family. In terms of assembly, homopentamer.

It localises to the cell inner membrane. Channel that opens in response to stretch forces in the membrane lipid bilayer. May participate in the regulation of osmotic pressure changes within the cell. This chain is Large-conductance mechanosensitive channel, found in Roseobacter denitrificans (strain ATCC 33942 / OCh 114) (Erythrobacter sp. (strain OCh 114)).